A 300-amino-acid polypeptide reads, in one-letter code: Merozoite surface protein 2 (300 aa).

Residues 1–20 (MKVIKTLSIINFFIFVTFNI) form the signal peptide. N-linked (GlcNAc...) asparagine glycosylation is found at Asn22 and Asn36. Positions 44–226 (EESKPPTGAV…EQTESPELQS (183 aa)) are polymorphic region. The stretch at 51-58 (GAVAGSGA) is one 1; inverted repeat. A 7 X 8 AA tandem repeats of G-S-G-A-G-A-V-A region spans residues 51-74 (GAVAGSGAGAGSGAGAVAGSGAGA). 5 repeat units span residues 61 to 68 (GSGAGAVA), 69 to 76 (GSGAGAVA), 77 to 84 (GSGAGAVA), 85 to 92 (GSGAGAVA), and 93 to 100 (GSGAGAVA). The 7; inverted repeat unit spans residues 103-110 (GAVAGSGA). Positions 111–261 (GNGANPGADA…DSQKECTDGN (151 aa)) are disordered. Residues 124-148 (PSTPATTTTTTTTNDAEASTSTSSE) show a composition bias toward low complexity. The segment covering 149-165 (NRNHNNAETNPKGKGEV) has biased composition (basic and acidic residues). Composition is skewed to polar residues over residues 167–193 (KPNQ…NVPR) and 200–228 (KSPT…QSAP). N-linked (GlcNAc...) asparagine glycosylation occurs at Asn177. Asn249 is a glycosylation site (N-linked (GlcNAc...) asparagine). A disulfide bridge links Cys257 with Cys265. Residues Asn273 and Asn274 are each glycosylated (N-linked (GlcNAc...) asparagine). Asn274 is lipidated: GPI-anchor amidated asparagine. A propeptide spans 275–300 (SSNIASINKFVVLISATLVLSFAIFI) (removed in mature form).

It localises to the cell membrane. Functionally, may play a role in the merozoite attachment to the erythrocyte. In Plasmodium falciparum (isolate mad71 / Papua New Guinea), this protein is Merozoite surface protein 2.